We begin with the raw amino-acid sequence, 307 residues long: Small ribosomal subunit biogenesis GTPase RsgA (307 aa).

Residues 64–229 (KNSLIRPSIA…IADTPGFSSL (166 aa)) form the CP-type G domain. Residues 113-116 (SKLD) and 172-180 (GQTGAGKTT) contribute to the GTP site. The Zn(2+) site is built by cysteine 253, cysteine 258, histidine 260, and cysteine 266.

The protein belongs to the TRAFAC class YlqF/YawG GTPase family. RsgA subfamily. In terms of assembly, monomer. Associates with 30S ribosomal subunit, binds 16S rRNA. Requires Zn(2+) as cofactor.

Its subcellular location is the cytoplasm. One of several proteins that assist in the late maturation steps of the functional core of the 30S ribosomal subunit. Helps release RbfA from mature subunits. May play a role in the assembly of ribosomal proteins into the subunit. Circularly permuted GTPase that catalyzes slow GTP hydrolysis, GTPase activity is stimulated by the 30S ribosomal subunit. This is Small ribosomal subunit biogenesis GTPase RsgA from Lactococcus lactis subsp. lactis (strain IL1403) (Streptococcus lactis).